A 298-amino-acid polypeptide reads, in one-letter code: Ribosomal RNA small subunit methyltransferase A (298 aa).

Positions 35, 37, 62, 83, 108, and 133 each coordinate S-adenosyl-L-methionine.

Belongs to the class I-like SAM-binding methyltransferase superfamily. rRNA adenine N(6)-methyltransferase family. RsmA subfamily.

The protein localises to the cytoplasm. It carries out the reaction adenosine(1518)/adenosine(1519) in 16S rRNA + 4 S-adenosyl-L-methionine = N(6)-dimethyladenosine(1518)/N(6)-dimethyladenosine(1519) in 16S rRNA + 4 S-adenosyl-L-homocysteine + 4 H(+). Its function is as follows. Specifically dimethylates two adjacent adenosines (A1518 and A1519) in the loop of a conserved hairpin near the 3'-end of 16S rRNA in the 30S particle. May play a critical role in biogenesis of 30S subunits. This Streptococcus pyogenes serotype M12 (strain MGAS9429) protein is Ribosomal RNA small subunit methyltransferase A.